We begin with the raw amino-acid sequence, 124 residues long: MADTAVARRPSAPTTGRLYVKAIFTGFKRGLRTQSEHTSLLKLEGVFNKEDAGFYAGKRVVYLYKAHNKTLKTGHTVATRTRAIWGKITRPHGNAGAVRAKFHHNIPPSALGKRIRVLLYPSNI.

An N-acetylalanine modification is found at Ala-2.

It belongs to the eukaryotic ribosomal protein eL33 family.

The chain is Large ribosomal subunit protein eL33 from Caenorhabditis elegans.